The chain runs to 275 residues: uncharacterized protein (275 aa).

It is found in the virion. This is an uncharacterized protein from Acanthamoeba polyphaga (Amoeba).